The sequence spans 190 residues: Xanthine phosphoribosyltransferase (190 aa).

The xanthine site is built by Leu-20 and Asn-27. 128–132 contributes to the 5-phospho-alpha-D-ribose 1-diphosphate binding site; sequence ANGKA. Lys-156 lines the xanthine pocket.

It belongs to the purine/pyrimidine phosphoribosyltransferase family. Xpt subfamily. In terms of assembly, homodimer.

Its subcellular location is the cytoplasm. The catalysed reaction is XMP + diphosphate = xanthine + 5-phospho-alpha-D-ribose 1-diphosphate. The protein operates within purine metabolism; XMP biosynthesis via salvage pathway; XMP from xanthine: step 1/1. Converts the preformed base xanthine, a product of nucleic acid breakdown, to xanthosine 5'-monophosphate (XMP), so it can be reused for RNA or DNA synthesis. The sequence is that of Xanthine phosphoribosyltransferase from Pseudomonas fluorescens (strain Pf0-1).